The following is a 1087-amino-acid chain: MNSKKIEELDKTTNHLDNSRNNMYSCTFMEKGDEDNILNSTILKMNNTEKGISFQTIEEEIKDKNKISNIPSDYAEKEKYCFNELLYTKQNGYINIIEKEDKPIQEILTDDKKNISEIDSSKSDKMDPCLSSQKVDEEYKYGDNYNINGDNPVHNSDEINEDSKCECSFFISKCDYEKDSDANTNGPKKSCKDSEENINYYNNNLLLGISENKDTLIKCDKIFERSYYSTSASTVLASNENEQNLQNISSYETVSSMNEKIKLDGNGKYEKLEKEQTYIMNKETNVINPQDYSIHDIGTYRDECISYLNKIKDIPHNIGSQINSYQNNNIIGNNNFKDKSYLIHENDFFDVETKKKNILQNYFLVNNNNEINANEDMNNRSDDLKNIEAVASDLNEIIEEDTIQKKINISKNCKIEENINMNINDHNKNAVFNFNINRQLFHDNQGDENMYKTNFNTENNKSINIINGMSKEVYEQNSGDIHAQVENINNIEQTTNNIIENNMMIIQGSDDLRFTTLNCINDNSNTDIMKCKRKIKNDENRENIMIKTDQKNIKMKDELDEDDKDELYGIPDKKRRKKNKKKKIPGRVYKVIVRGKECWRAEWLVQKNQENIEREKEESKMDRYSIMKLENTKDVDKNINKMNTPNFQKKSKQFSVSVYGYENARLFALFELIKYNSVPDSLKEEASICIHNIKRNIMNSENSSNKSFSGHFLQFLLADENNEYSSLLYKRLEDNVIQNVNKYSMHEMNNINRMNLFQTQGKEIGFRNEKYFTVQYDNENGHGNNIVDGTIWNIQNNERNLFYNNNNKCRNDYYYNNSNDIIKMKKENNEKLTTFNDNNFYNKANYINRYNNPYVSNNNPSIHNLNNLVYNINSYDFNPMHIRNGYGNDSNSTINISSPNSNYHRGFGEEKDIQKKKNFFNINNTRKYVGDINNKPMDGFKQNLFEKVLNNLENNMGNNNLYNYNSLEHHINSKVKSTYPYNNDNITNDPANTTTMISHGANNNQISNETEIRNSQQILHDNLLVYRNFMNPSSCDIGNVDKNSENDRGEKMASNFEGAFLNKSNIVFKQNANFDPFLGRNVSNINT.

Positions 586–682 form a DNA-binding region, AP2; the sequence is GRVYKVIVRG…IKYNSVPDSL (97 aa).

It belongs to the AP2/ERF transcription factor family. AP2 subfamily.

It is found in the nucleus. The protein localises to the chromosome. Its function is as follows. Transcription factor which binds the 5'-[TC][AC]TG[AT]AC[AG]-3' motif. During the mosquito vector stage, plays an essential role in the zygote for de novo transcription of genes required for ookinete formation. The protein is Transcription factor AP2-Z of Plasmodium berghei (strain Anka).